The following is a 396-amino-acid chain: Elongation factor Tu (396 aa).

In terms of domain architecture, tr-type G spans 10 to 206 (KPHCNIGTIG…AVDSYIPQPE (197 aa)). Positions 19 to 26 (GHVDHGKT) are G1. A GTP-binding site is contributed by 19-26 (GHVDHGKT). Threonine 26 lines the Mg(2+) pocket. Residues 60–64 (GITIS) are G2. A G3 region spans residues 81–84 (DCPG). GTP-binding positions include 81–85 (DCPGH) and 136–139 (NKVD). Residues 136-139 (NKVD) form a G4 region. Residues 174-176 (SAV) are G5.

Belongs to the TRAFAC class translation factor GTPase superfamily. Classic translation factor GTPase family. EF-Tu/EF-1A subfamily. As to quaternary structure, monomer.

It is found in the cytoplasm. The catalysed reaction is GTP + H2O = GDP + phosphate + H(+). Its function is as follows. GTP hydrolase that promotes the GTP-dependent binding of aminoacyl-tRNA to the A-site of ribosomes during protein biosynthesis. The chain is Elongation factor Tu from Rhizorhabdus wittichii (strain DSM 6014 / CCUG 31198 / JCM 15750 / NBRC 105917 / EY 4224 / RW1) (Sphingomonas wittichii).